The chain runs to 1137 residues: DNA mismatch repair protein Msh3 (1137 aa).

Low complexity-rich tracts occupy residues 31–42 (TGSLKSTSSSTG) and 51–62 (AAAAAAAAAAAA). Disordered regions lie at residues 31–122 (TGSL…SEPK) and 201–222 (SQFG…KSAN). Serine 33 is subject to Phosphoserine. Residues 63 to 76 (PPAPPAPAFPPQLP) are compositionally biased toward pro residues. Residues 75–297 (LPPHIATEID…HRLFVHVRRL (223 aa)) are interaction with EXO1. The span at 81–97 (TEIDRRKKRPLENDGPV) shows a compositional bias: basic and acidic residues. Residues 201–220 (SQFGSSNTSHENLQKTASKS) are compositionally biased toward polar residues. 896–903 (GPNMGGKS) contacts ATP. The residue at position 1099 (threonine 1099) is a Phosphothreonine.

The protein belongs to the DNA mismatch repair MutS family. MSH3 subfamily. In terms of assembly, component of the DNA mismatch repair (MMR) complex composed at least of MSH2, MSH3, MSH6, PMS1 and MLH1. Heterodimer consisting of MSH2-MSH3 (MutS beta). Forms a ternary complex with MutL alpha (MLH1-PMS1). Interacts with EXO1. Interacts with MCM9.

Its function is as follows. Component of the post-replicative DNA mismatch repair system (MMR). Heterodimerizes with MSH2 to form MutS beta which binds to DNA mismatches thereby initiating DNA repair. When bound, the MutS beta heterodimer bends the DNA helix and shields approximately 20 base pairs. MutS beta recognizes large insertion-deletion loops (IDL) up to 13 nucleotides long. After mismatch binding, forms a ternary complex with the MutL alpha heterodimer, which is thought to be responsible for directing the downstream MMR events, including strand discrimination, excision, and resynthesis. This chain is DNA mismatch repair protein Msh3 (MSH3), found in Homo sapiens (Human).